Reading from the N-terminus, the 240-residue chain is Regulatory protein RecX (240 aa).

This sequence belongs to the RecX family.

It localises to the cytoplasm. Its function is as follows. Modulates RecA activity. This chain is Regulatory protein RecX, found in Lacticaseibacillus paracasei (strain ATCC 334 / BCRC 17002 / CCUG 31169 / CIP 107868 / KCTC 3260 / NRRL B-441) (Lactobacillus paracasei).